We begin with the raw amino-acid sequence, 228 residues long: Putative adhesin A1I_01215 (228 aa).

A signal peptide spans 1–22 (MKKLLLIAATSATVLSSALSFA).

The polypeptide is Putative adhesin A1I_01215 (Rickettsia bellii (strain OSU 85-389)).